Here is a 211-residue protein sequence, read N- to C-terminus: Small ribosomal subunit protein uS5 (211 aa).

Residues 1 to 41 (MPGRERRDGGRSADDNKQNDRNERRGGGRRDDRRNQQQDER) are disordered. One can recognise an S5 DRBM domain in the interval 44–107 (YIERVVTINR…EEARKNFFRV (64 aa)).

Belongs to the universal ribosomal protein uS5 family. In terms of assembly, part of the 30S ribosomal subunit. Contacts proteins S4 and S8.

Its function is as follows. With S4 and S12 plays an important role in translational accuracy. Located at the back of the 30S subunit body where it stabilizes the conformation of the head with respect to the body. In Corynebacterium glutamicum (strain R), this protein is Small ribosomal subunit protein uS5.